We begin with the raw amino-acid sequence, 61 residues long: uncharacterized protein (61 aa).

A signal peptide spans 1-28; sequence MHRRARRMPMRPRRSKRVRNRYTMGTFA.

This is an uncharacterized protein from Mycobacterium tuberculosis (strain ATCC 25618 / H37Rv).